A 932-amino-acid polypeptide reads, in one-letter code: Protein translocase subunit SecA (932 aa).

Residues Gln-90, 108-112 (GEGKT), and Asp-498 each bind ATP.

Belongs to the SecA family. As to quaternary structure, monomer and homodimer. Part of the essential Sec protein translocation apparatus which comprises SecA, SecYEG and auxiliary proteins SecDF. Other proteins may also be involved.

It localises to the cell inner membrane. Its subcellular location is the cellular thylakoid membrane. The protein resides in the cytoplasm. It catalyses the reaction ATP + H2O + cellular proteinSide 1 = ADP + phosphate + cellular proteinSide 2.. Functionally, part of the Sec protein translocase complex. Interacts with the SecYEG preprotein conducting channel. Has a central role in coupling the hydrolysis of ATP to the transfer of proteins into and across the cell membrane, serving as an ATP-driven molecular motor driving the stepwise translocation of polypeptide chains across the membrane. Its function is as follows. Probably participates in protein translocation into and across both the cytoplasmic and thylakoid membranes in cyanobacterial cells. The sequence is that of Protein translocase subunit SecA from Synechocystis sp. (strain ATCC 27184 / PCC 6803 / Kazusa).